The following is a 262-amino-acid chain: F-actin-capping protein subunit alpha (262 aa).

The protein belongs to the F-actin-capping protein alpha subunit family. Heterodimer of an alpha and a beta subunit.

It localises to the cytoplasm. Its subcellular location is the cytoskeleton. Its function is as follows. F-actin-capping proteins bind in a Ca(2+)-independent manner to the fast growing ends of actin filaments (barbed end) thereby blocking the exchange of subunits at these ends. Unlike other capping proteins (such as gelsolin and severin), these proteins do not sever actin filaments. This Yarrowia lipolytica (strain CLIB 122 / E 150) (Yeast) protein is F-actin-capping protein subunit alpha (CAP1).